A 154-amino-acid polypeptide reads, in one-letter code: Neurotrophin-3 (154 aa).

An N-terminal signal peptide occupies residues 1–18 (MSILFYVMFLAYLRGVQG). A propeptide spanning residues 19–134 (NSMDQRSLPE…VNSRSPRRKR (116 aa)) is cleaved from the precursor.

Belongs to the NGF-beta family.

It localises to the secreted. Its function is as follows. Seems to promote the survival of visceral and proprioceptive sensory neurons. The chain is Neurotrophin-3 (NTF3) from Cervus elaphus (Red deer).